The chain runs to 154 residues: Deoxyuridine 5'-triphosphate nucleotidohydrolase (154 aa).

Residues 72-74 (RSG), asparagine 85, 89-91 (LID), and methionine 99 each bind substrate.

It belongs to the dUTPase family. Mg(2+) is required as a cofactor.

The catalysed reaction is dUTP + H2O = dUMP + diphosphate + H(+). It participates in pyrimidine metabolism; dUMP biosynthesis; dUMP from dCTP (dUTP route): step 2/2. In terms of biological role, this enzyme is involved in nucleotide metabolism: it produces dUMP, the immediate precursor of thymidine nucleotides and it decreases the intracellular concentration of dUTP so that uracil cannot be incorporated into DNA. The polypeptide is Deoxyuridine 5'-triphosphate nucleotidohydrolase (Psychrobacter arcticus (strain DSM 17307 / VKM B-2377 / 273-4)).